Here is a 169-residue protein sequence, read N- to C-terminus: Ribosome-binding factor A (169 aa).

The tract at residues 124–169 (AGAKHAGDADPYKSDIPEDVEIDEDDFDEEDEDLIDDEELDEDGNK) is disordered. Basic and acidic residues predominate over residues 128–139 (HAGDADPYKSDI). The segment covering 140–169 (PEDVEIDEDDFDEEDEDLIDDEELDEDGNK) has biased composition (acidic residues).

This sequence belongs to the RbfA family. Monomer. Binds 30S ribosomal subunits, but not 50S ribosomal subunits or 70S ribosomes.

The protein resides in the cytoplasm. Its function is as follows. One of several proteins that assist in the late maturation steps of the functional core of the 30S ribosomal subunit. Associates with free 30S ribosomal subunits (but not with 30S subunits that are part of 70S ribosomes or polysomes). Required for efficient processing of 16S rRNA. May interact with the 5'-terminal helix region of 16S rRNA. The sequence is that of Ribosome-binding factor A from Arthrobacter sp. (strain FB24).